Reading from the N-terminus, the 252-residue chain is Imidazole glycerol phosphate synthase subunit HisF (252 aa).

Residues Asp11 and Asp130 contribute to the active site.

Belongs to the HisA/HisF family. Heterodimer of HisH and HisF.

It localises to the cytoplasm. The catalysed reaction is 5-[(5-phospho-1-deoxy-D-ribulos-1-ylimino)methylamino]-1-(5-phospho-beta-D-ribosyl)imidazole-4-carboxamide + L-glutamine = D-erythro-1-(imidazol-4-yl)glycerol 3-phosphate + 5-amino-1-(5-phospho-beta-D-ribosyl)imidazole-4-carboxamide + L-glutamate + H(+). It functions in the pathway amino-acid biosynthesis; L-histidine biosynthesis; L-histidine from 5-phospho-alpha-D-ribose 1-diphosphate: step 5/9. Its function is as follows. IGPS catalyzes the conversion of PRFAR and glutamine to IGP, AICAR and glutamate. The HisF subunit catalyzes the cyclization activity that produces IGP and AICAR from PRFAR using the ammonia provided by the HisH subunit. This chain is Imidazole glycerol phosphate synthase subunit HisF, found in Bacillus cereus (strain Q1).